We begin with the raw amino-acid sequence, 1749 residues long: E3 ubiquitin-protein ligase UBR1 (1749 aa).

Ala2 bears the N-acetylalanine mark. Residue Thr21 is modified to Phosphothreonine. Residues Gln97 to Pro168 form a UBR-type zinc finger. The Zn(2+) site is built by Cys99, Cys112, Cys115, Cys124, Cys127, His133, and His136. Phe148 is a binding site for a peptide. Residue Cys149 participates in Zn(2+) binding. Asp150 serves as a coordination point for a peptide. Residue Cys151 coordinates Zn(2+). Position 153 (Asp153) interacts with a peptide. Positions 163 and 166 each coordinate Zn(2+). The tract at residues Gln842 to Pro868 is disordered. The tract at residues Arg1019–Asn1054 is UBC2-binding region (U2BR). Residues Cys1098, Cys1101, Cys1159, His1161, His1164, and Cys1167 each coordinate Zn(2+). The RING-type; atypical zinc finger occupies Cys1098 to Lys1201. Ser1179 is modified (phosphoserine). Residues Cys1197, Cys1200, Cys1627, Cys1630, and Cys1653 each coordinate Zn(2+).

It belongs to the E3 ubiquitin-protein ligase UBR1-like family. As to quaternary structure, interacts with RECQL4. As to expression, broadly expressed, with highest levels in skeletal muscle, kidney and pancreas. Present in acinar cells of the pancreas (at protein level).

It localises to the cytoplasm. The protein localises to the cytosol. It catalyses the reaction S-ubiquitinyl-[E2 ubiquitin-conjugating enzyme]-L-cysteine + [acceptor protein]-L-lysine = [E2 ubiquitin-conjugating enzyme]-L-cysteine + N(6)-ubiquitinyl-[acceptor protein]-L-lysine.. Its pathway is protein modification; protein ubiquitination. Its activity is regulated as follows. Inhibited by the small-molecule compound RF-C11, which bears two heterovalent ligands: RF-C11 inhibits activity toward both type-1 and type-2 N-degrons. In terms of biological role, E3 ubiquitin-protein ligase which is a component of the N-end rule pathway. Recognizes and binds proteins bearing specific N-terminal residues that are destabilizing according to the N-end rule, leading to their ubiquitination and subsequent degradation. Recognizes both type-1 and type-2 N-degrons, containing positively charged amino acids (Arg, Lys and His) and bulky and hydrophobic amino acids, respectively. Does not ubiquitinate proteins that are acetylated at the N-terminus. In contrast, it strongly binds methylated N-degrons. Binds leucine and is a negative regulator of the leucine-mTOR signaling pathway, thereby controlling cell growth. The chain is E3 ubiquitin-protein ligase UBR1 from Homo sapiens (Human).